The following is a 288-amino-acid chain: 33 kDa chaperonin (288 aa).

Intrachain disulfides connect Cys-235-Cys-237 and Cys-268-Cys-271.

This sequence belongs to the HSP33 family. In terms of processing, under oxidizing conditions two disulfide bonds are formed involving the reactive cysteines. Under reducing conditions zinc is bound to the reactive cysteines and the protein is inactive.

The protein resides in the cytoplasm. In terms of biological role, redox regulated molecular chaperone. Protects both thermally unfolding and oxidatively damaged proteins from irreversible aggregation. Plays an important role in the bacterial defense system toward oxidative stress. The protein is 33 kDa chaperonin of Streptococcus thermophilus (strain ATCC BAA-250 / LMG 18311).